Consider the following 450-residue polypeptide: Akuammiline synthase 2 (450 aa).

His-154 functions as the Proton acceptor in the catalytic mechanism. The short motif at 218 to 225 (MRRFVFDA) is the Nuclear localization signal element. Asp-376 (proton acceptor) is an active-site residue.

Belongs to the plant acyltransferase family. As to quaternary structure, monomer.

The protein localises to the cytoplasm. Its subcellular location is the nucleus. The catalysed reaction is rhazimol + acetyl-CoA = akuammiline + CoA + H(+). Its pathway is alkaloid biosynthesis. Its function is as follows. Acyltransferase involved in the biosynthesis of akuammilan monoterpene indole alkaloids (MIAs) natural products, components with various biological properties such as antidiabetic, antibacterial, anti-inflammatory, anticancer, and antimalarial activities. Catalyzes the conversion of rhazimol to akuammiline. This is Akuammiline synthase 2 from Alstonia scholaris (Dogbane).